Consider the following 138-residue polypeptide: Transcription antitermination protein NusB (138 aa).

This sequence belongs to the NusB family.

Involved in transcription antitermination. Required for transcription of ribosomal RNA (rRNA) genes. Binds specifically to the boxA antiterminator sequence of the ribosomal RNA (rrn) operons. This Yersinia enterocolitica serotype O:8 / biotype 1B (strain NCTC 13174 / 8081) protein is Transcription antitermination protein NusB.